The sequence spans 183 residues: Ferritin heavy polypeptide-like 17 (183 aa).

In terms of domain architecture, Ferritin-like diiron spans glutamine 11–cysteine 160. Positions 28, 66, 108, and 142 each coordinate Fe cation.

Belongs to the ferritin family. As to expression, testis specific. Also expressed in several cancers.

In Homo sapiens (Human), this protein is Ferritin heavy polypeptide-like 17 (FTHL17).